Here is a 1593-residue protein sequence, read N- to C-terminus: ABC transporter C family member 8 (1593 aa).

The next 10 helical transmembrane spans lie at 27 to 47, 75 to 95, 100 to 120, 135 to 155, 169 to 189, 280 to 300, 318 to 338, 392 to 412, 419 to 439, and 505 to 525; these read VVMT…LYYL, VIVS…IVSI, FEIL…GLVY, LYWV…TLAI, FSYF…VLFF, FYIA…GPTL, YDGL…SLLL, LCPY…SLVL, ASVF…LAIS, and LLLW…VYIL. Residues 280-561 enclose the ABC transmembrane type-1 1 domain; sequence FYIAALFKII…LPSVVSSIIE (282 aa). In terms of domain architecture, ABC transporter 1 spans 594–818; the sequence is VKIDNATLEW…GSHFTELMSH (225 aa). 627–634 serves as a coordination point for ATP; sequence GQVGSGKS. The disordered stretch occupies residues 816 to 938; sequence MSHDEQQQQL…PLQKGEKSSV (123 aa). Positions 844 to 875 form a coiled coil; it reads GDNKESENNEEQNEEEEGENENLLEKVLRKSR. Over residues 851–865 the composition is skewed to acidic residues; the sequence is NNEEQNEEEEGENEN. Residues 877 to 886 show a composition bias toward low complexity; the sequence is RSPSPSSNRN. Positions 905-922 are enriched in acidic residues; it reads EEDEQDERELMEDIDIDG. 5 helical membrane passes run 1005–1025, 1064–1084, 1157–1177, 1251–1271, and 1280–1300; these read IGVL…LLSI, AKYY…ATFL, IIVI…VGAL, LAIR…LYTV, and GTAG…NWMV. Residues 1010 to 1308 enclose the ABC transmembrane type-1 2 domain; the sequence is ATCIIGFYVL…MVRMSCDLEN (299 aa). The 235-residue stretch at 1344 to 1578 folds into the ABC transporter 2 domain; the sequence is IVFKNLWLTY…QDSIYYSLVK (235 aa). 1378-1385 is an ATP binding site; that stretch reads GRTGAGKS.

It belongs to the ABC transporter superfamily. ABCC family. Conjugate transporter (TC 3.A.1.208) subfamily.

The protein localises to the membrane. The protein is ABC transporter C family member 8 (abcC8) of Dictyostelium discoideum (Social amoeba).